The chain runs to 264 residues: Thymidylate synthase (264 aa).

Arg-21 provides a ligand contact to dUMP. (6R)-5,10-methylene-5,6,7,8-tetrahydrofolate is bound at residue His-51. Residue 126-127 (RR) coordinates dUMP. Cys-146 serves as the catalytic Nucleophile. DUMP contacts are provided by residues 166 to 169 (RSAD), Asn-177, and 207 to 209 (HIY). Residue Asp-169 participates in (6R)-5,10-methylene-5,6,7,8-tetrahydrofolate binding. Residue Ala-263 participates in (6R)-5,10-methylene-5,6,7,8-tetrahydrofolate binding.

It belongs to the thymidylate synthase family. Bacterial-type ThyA subfamily. Homodimer.

The protein resides in the cytoplasm. It catalyses the reaction dUMP + (6R)-5,10-methylene-5,6,7,8-tetrahydrofolate = 7,8-dihydrofolate + dTMP. It participates in pyrimidine metabolism; dTTP biosynthesis. Catalyzes the reductive methylation of 2'-deoxyuridine-5'-monophosphate (dUMP) to 2'-deoxythymidine-5'-monophosphate (dTMP) while utilizing 5,10-methylenetetrahydrofolate (mTHF) as the methyl donor and reductant in the reaction, yielding dihydrofolate (DHF) as a by-product. This enzymatic reaction provides an intracellular de novo source of dTMP, an essential precursor for DNA biosynthesis. The chain is Thymidylate synthase from Cupriavidus metallidurans (strain ATCC 43123 / DSM 2839 / NBRC 102507 / CH34) (Ralstonia metallidurans).